Here is a 99-residue protein sequence, read N- to C-terminus: Small ribosomal subunit protein bS6c (99 aa).

Belongs to the bacterial ribosomal protein bS6 family.

The protein resides in the plastid. The protein localises to the chloroplast. Binds together with bS18 to 16S ribosomal RNA. This is Small ribosomal subunit protein bS6c from Cyanidioschyzon merolae (strain NIES-3377 / 10D) (Unicellular red alga).